We begin with the raw amino-acid sequence, 967 residues long: RNA polymerase-associated protein RapA (967 aa).

One can recognise a Helicase ATP-binding domain in the interval E163–N333. D176–T183 provides a ligand contact to ATP. Residues D279–H282 carry the DEAH box motif. Residues R489–K677 enclose the Helicase C-terminal domain.

Belongs to the SNF2/RAD54 helicase family. RapA subfamily. Interacts with the RNAP. Has a higher affinity for the core RNAP than for the holoenzyme. Its ATPase activity is stimulated by binding to RNAP.

In terms of biological role, transcription regulator that activates transcription by stimulating RNA polymerase (RNAP) recycling in case of stress conditions such as supercoiled DNA or high salt concentrations. Probably acts by releasing the RNAP, when it is trapped or immobilized on tightly supercoiled DNA. Does not activate transcription on linear DNA. Probably not involved in DNA repair. The protein is RNA polymerase-associated protein RapA of Pectobacterium atrosepticum (strain SCRI 1043 / ATCC BAA-672) (Erwinia carotovora subsp. atroseptica).